Consider the following 423-residue polypeptide: Serine--tRNA ligase (423 aa).

228 to 230 (TSE) provides a ligand contact to L-serine. Residue 259–261 (RLE) coordinates ATP. E282 provides a ligand contact to L-serine. 346-349 (EISS) contributes to the ATP binding site. S384 is a binding site for L-serine.

It belongs to the class-II aminoacyl-tRNA synthetase family. Type-1 seryl-tRNA synthetase subfamily. As to quaternary structure, homodimer. The tRNA molecule binds across the dimer.

It localises to the cytoplasm. It carries out the reaction tRNA(Ser) + L-serine + ATP = L-seryl-tRNA(Ser) + AMP + diphosphate + H(+). The enzyme catalyses tRNA(Sec) + L-serine + ATP = L-seryl-tRNA(Sec) + AMP + diphosphate + H(+). It functions in the pathway aminoacyl-tRNA biosynthesis; selenocysteinyl-tRNA(Sec) biosynthesis; L-seryl-tRNA(Sec) from L-serine and tRNA(Sec): step 1/1. Its function is as follows. Catalyzes the attachment of serine to tRNA(Ser). Is also able to aminoacylate tRNA(Sec) with serine, to form the misacylated tRNA L-seryl-tRNA(Sec), which will be further converted into selenocysteinyl-tRNA(Sec). This Ehrlichia canis (strain Jake) protein is Serine--tRNA ligase.